We begin with the raw amino-acid sequence, 368 residues long: H-2 class I histocompatibility antigen, K-D alpha chain (368 aa).

Positions 1–21 (MAPCTLLLLLAAALAPTQTRA) are cleaved as a signal peptide. The segment at 22 to 111 (GPHSLRYFVT…AQRYYNQSKG (90 aa)) is alpha-1. Residues 22 to 305 (GPHSLRYFVT…KLPPSTVSNT (284 aa)) are Extracellular-facing. A glycan (N-linked (GlcNAc...) asparagine) is linked at N107. Residues 112–203 (GSHTFQRMFG…ELGNETLLRT (92 aa)) are alpha-2. The cysteines at positions 122 and 185 are disulfide-linked. N-linked (GlcNAc...) asparagine glycans are attached at residues N197 and N277. An alpha-3 region spans residues 204-295 (DSPKAHVTYH…GLPEPLTLRW (92 aa)). The 89-residue stretch at 206–294 (PKAHVTYHPR…KGLPEPLTLR (89 aa)) folds into the Ig-like C1-type domain. A disulfide bridge connects residues C224 and C280. The segment at 296–305 (KLPPSTVSNT) is connecting peptide. A helical transmembrane segment spans residues 306–328 (VIIAVLVVLGAAIVTGAVVAFVM). The Cytoplasmic segment spans residues 329–368 (KMRRNTGGKGVNYALAPGSQTSDLSLPDGKVMVHDPHSLA). S350 and S353 each carry phosphoserine.

It belongs to the MHC class I family. As to quaternary structure, heterodimer of an alpha chain and a beta chain (beta-2-microglobulin).

The protein resides in the membrane. Involved in the presentation of foreign antigens to the immune system. The chain is H-2 class I histocompatibility antigen, K-D alpha chain (H2-K1) from Mus musculus (Mouse).